Reading from the N-terminus, the 650-residue chain is SPARC-like protein 1 (650 aa).

The signal sequence occupies residues 1 to 16 (MKAVLLLLCALGTAVA). The interval 51–352 (TADIENHPSD…HGAGDDYFIP (302 aa)) is disordered. Over residues 54–64 (IENHPSDKAEK) the composition is skewed to basic and acidic residues. 3 positions are modified to phosphoserine: serine 70, serine 78, and serine 86. Positions 75–85 (HEQSTEQDKTY) are enriched in basic and acidic residues. Residues 91-101 (LKDEEDGDGDL) show a composition bias toward acidic residues. Composition is skewed to polar residues over residues 116–126 (EGTSEPQQKSL) and 135–148 (TVSTSYVDPNQRAN). N-linked (GlcNAc...) asparagine glycosylation is present at asparagine 148. A phosphoserine mark is found at serine 155 and serine 163. The segment covering 157-174 (EQPVSDSHQQPNESSKQT) has biased composition (polar residues). N-linked (GlcNAc...) asparagine glycosylation occurs at asparagine 168. The segment covering 189 to 210 (IPNEEEEEEEDEEEEEEEEPED) has biased composition (acidic residues). Serine 272 carries the phosphoserine modification. Positions 277–299 (EDKAAGSKEHIPHTEQQDQEGKA) are enriched in basic and acidic residues. Residue serine 353 is modified to Phosphoserine. A disordered region spans residues 375-415 (EETTTGESENRREAADNQEAKKAESSPNAEPSDEGNSREHS). The segment covering 382–398 (SENRREAADNQEAKKAE) has biased composition (basic and acidic residues). Serine 406 carries the post-translational modification Phosphoserine. The 23-residue stretch at 418–440 (SCTNFQCKRGHICKTDPQGKPHC) folds into the Follistatin-like domain. 7 cysteine pairs are disulfide-bonded: cysteine 419-cysteine 430, cysteine 424-cysteine 440, cysteine 442-cysteine 476, cysteine 448-cysteine 469, cysteine 458-cysteine 495, cysteine 501-cysteine 612, and cysteine 620-cysteine 636. A Kazal-like domain is found at 436–497 (GKPHCVCQDP…QLDYFGACKS (62 aa)). Asparagine 462 is a glycosylation site (N-linked (GlcNAc...) asparagine). One can recognise an EF-hand domain in the interval 608-643 (PMEHCITRFFEECDPNKDKHITLKEWGHCFGIKEED). Residues aspartate 621, asparagine 623, aspartate 625, histidine 627, and glutamate 632 each coordinate Ca(2+).

Belongs to the SPARC family. Highest expression in brain. Moderate levels in heart, adrenal gland, epididymis and lung. Low levels in kidney, eye, liver, spleen, submandibular gland and testis.

It localises to the secreted. Its subcellular location is the extracellular space. The protein resides in the extracellular matrix. In Mus musculus (Mouse), this protein is SPARC-like protein 1 (Sparcl1).